A 114-amino-acid chain; its full sequence is As-peptide 126 (114 aa).

Positions 1-22 (MSRALICSLALLAMLVISGTYA) are cleaved as a signal peptide. Tandem repeats lie at residues 22 to 29 (ASPAANAE), 30 to 37 (ALAAANAE), 38 to 45 (ASAAANAE), 46 to 53 (PLAAANAE), 54 to 61 (PLAAANAE), 62 to 69 (PLAAANAD), 70 to 77 (PIAAANAE), 78 to 85 (PSAAANAE), and 86 to 93 (PLAAANAE). Residues 22–93 (ASPAANAEAL…AEPLAAANAE (72 aa)) are 9 X 8 AA approximate tandem repeats of [AP]-[ILS]-[AP]-A-A-N-A-[DE]. A propeptide spanning residues 23–104 (SPAANAEALA…SAGPSPLAAA (82 aa)) is cleaved from the precursor. Positions 82-96 (ANAEPLAAANAEPSA) are enriched in low complexity. Residues 82-114 (ANAEPLAAANAEPSAGPSPLAAAQDPPVVKMKG) are disordered. Residue Q105 is modified to Pyrrolidone carboxylic acid. K113 bears the Lysine amide mark.

In terms of tissue distribution, expressed by the venom gland.

It localises to the secreted. This chain is As-peptide 126, found in Anoplius samariensis (Solitary wasp).